Reading from the N-terminus, the 555-residue chain is Formate--tetrahydrofolate ligase (555 aa).

Residue 65–72 (TPAGEGKT) participates in ATP binding.

Belongs to the formate--tetrahydrofolate ligase family.

It catalyses the reaction (6S)-5,6,7,8-tetrahydrofolate + formate + ATP = (6R)-10-formyltetrahydrofolate + ADP + phosphate. The protein operates within one-carbon metabolism; tetrahydrofolate interconversion. This is Formate--tetrahydrofolate ligase from Paracoccus denitrificans (strain Pd 1222).